We begin with the raw amino-acid sequence, 146 residues long: Benzoylsuccinyl-CoA thiolase subunit BbsA (146 aa).

Residues Cys42, Cys45, Cys55, and Cys58 each coordinate Zn(2+).

Belongs to the BbsA family. In terms of assembly, heterotetramer composed of two BbsA subunits and two BbsB subunits. Both BbsA and BbsB are essential for enzymatic activity.

It catalyses the reaction (S)-2-benzoylsuccinyl-CoA + CoA = benzoyl-CoA + succinyl-CoA. It participates in xenobiotic degradation; toluene degradation. Its function is as follows. Component of the BbsAB thiolase complex, which catalyzes the thiolytic cleavage of (S)-2-benzoylsuccinyl-CoA to succinyl-CoA and benzoyl-CoA, the final step of anaerobic toluene metabolism. The BbsA subunit critically contributes to an induced-fit process for productive binding of a CoA substrate into the active site of BbsB. The chain is Benzoylsuccinyl-CoA thiolase subunit BbsA from Geobacter metallireducens (strain ATCC 53774 / DSM 7210 / GS-15).